A 1238-amino-acid polypeptide reads, in one-letter code: Multifunctional 2-oxoglutarate metabolism enzyme (1238 aa).

A 2-oxoglutarate dehydrogenase E1, N-terminal part region spans residues 1-41 (MANISSPFGQNEWLVEEMYRKFRDDPSSVDPSWHEFLVDYN). The segment at 42–97 (PESTAEPVLTDPTSTDKQPSATPQAKPAAAADPVASRAKPATTPTVANGTAAGSAA) is linker. The segment at 44–108 (STAEPVLTDP…PAKTTTTPPI (65 aa)) is disordered. Residues 59–107 (QPSATPQAKPAAAADPVASRAKPATTPTVANGTAAGSAAAPAKTTTTPP) show a composition bias toward low complexity. The interval 98-346 (APAKTTTTPP…LRTIHEMVLS (249 aa)) is succinyltransferase E2. The active-site Proton acceptor; for succinyltransferase activity is the His325. The tract at residues 347–1238 (DSFWDEIFRE…QQEILDTAFG (892 aa)) is 2-oxoglutarate dehydrogenase E1, C-terminal part. Arg551 contributes to the thiamine diphosphate binding site. 2-oxoglutarate is bound by residues His590 and Ser615. Thiamine diphosphate-binding residues include Ser615, Leu617, Asp657, Ala658, Ala659, and Asn690. Asp657 serves as a coordination point for Mg(2+). Residues Asn690 and Ile692 each coordinate Mg(2+). Positions 795 to 825 (DISLKEAEDALRDYQGQLERVFNEVRDLEKH) form a coiled coil. His1032 provides a ligand contact to 2-oxoglutarate. Positions 1050, 1066, 1101, 1104, 1154, 1161, and 1162 each coordinate acetyl-CoA.

The protein belongs to the 2-oxoacid dehydrogenase family. Kgd subfamily. Homodimer. The 2-oxoglutarate dehydrogenase (ODH) complex contains multiple copies of three enzymatic components: 2-oxoglutarate dehydrogenase (E1), dihydrolipoamide succinyltransferase (E2) and lipoamide dehydrogenase (E3). The cofactor is Mg(2+). Thiamine diphosphate is required as a cofactor.

It catalyses the reaction glyoxylate + 2-oxoglutarate + H(+) = 2-hydroxy-3-oxoadipate + CO2. The enzyme catalyses 2-oxoglutarate + H(+) = succinate semialdehyde + CO2. It carries out the reaction N(6)-[(R)-lipoyl]-L-lysyl-[protein] + 2-oxoglutarate + H(+) = N(6)-[(R)-S(8)-succinyldihydrolipoyl]-L-lysyl-[protein] + CO2. The catalysed reaction is N(6)-[(R)-dihydrolipoyl]-L-lysyl-[protein] + succinyl-CoA = N(6)-[(R)-S(8)-succinyldihydrolipoyl]-L-lysyl-[protein] + CoA. It functions in the pathway carbohydrate metabolism; tricarboxylic acid cycle; succinate from 2-oxoglutarate (transferase route): step 1/2. Its pathway is carbohydrate metabolism; tricarboxylic acid cycle; succinyl-CoA from 2-oxoglutarate (dehydrogenase route): step 1/1. Its activity is regulated as follows. Alpha-ketoglutarate dehydrogenase and decarboxylase activities are inhibited by unphosphorylated GarA, and allosterically activated by acetyl-CoA, the main substrate of the TCA cycle. In terms of biological role, shows three enzymatic activities that share a first common step, the attack of thiamine-PP on 2-oxoglutarate (alpha-ketoglutarate, KG), leading to the formation of an enamine-thiamine-PP intermediate upon decarboxylation. Thus, displays KGD activity, catalyzing the decarboxylation from five-carbon 2-oxoglutarate to four-carbon succinate semialdehyde (SSA). Also catalyzes C-C bond formation between the activated aldehyde formed after decarboxylation of alpha-ketoglutarate and the carbonyl of glyoxylate (GLX), to yield 2-hydroxy-3-oxoadipate (HOA), which spontaneously decarboxylates to form 5-hydroxylevulinate (HLA). And is also a component of the 2-oxoglutarate dehydrogenase (ODH) complex, that catalyzes the overall conversion of 2-oxoglutarate to succinyl-CoA and CO(2). The KG decarboxylase and KG dehydrogenase reactions provide two alternative, tightly regulated, pathways connecting the oxidative and reductive branches of the TCA cycle. The sequence is that of Multifunctional 2-oxoglutarate metabolism enzyme (kgd) from Mycobacterium leprae (strain TN).